Consider the following 624-residue polypeptide: Chaperone protein HtpG (624 aa).

Residues 1-341 (MAVKQFKAES…SPDLSLNISR (341 aa)) form an a; substrate-binding region. The tract at residues 342–550 (ELLQHDRQLK…DGELSIEMEK (209 aa)) is b. Residues 551–624 (VLKMMPDNNN…FANDVASLMK (74 aa)) form a c region.

It belongs to the heat shock protein 90 family. Homodimer.

Its subcellular location is the cytoplasm. In terms of biological role, molecular chaperone. Has ATPase activity. The chain is Chaperone protein HtpG from Clostridium acetobutylicum (strain ATCC 824 / DSM 792 / JCM 1419 / IAM 19013 / LMG 5710 / NBRC 13948 / NRRL B-527 / VKM B-1787 / 2291 / W).